The sequence spans 929 residues: Collagen alpha-1(XII) chain (929 aa).

One can recognise a VWFA 1 domain in the interval 1 to 49 (DVEIFAVGVKDAVRSELEAIATPPTATHVYTVEDFDAFQRISFELTQSI). Fibronectin type-III domains lie at 67–156 (PPRD…LEVR), 158–250 (APRN…VGEP), 251–340 (KNLR…LQER), 342–432 (SPRD…ASPD), 434–521 (KIVK…LSPF), and 523–613 (APRS…TLRD). Asn98 is a glycosylation site (N-linked (GlcNAc...) asparagine). 3 O-linked (Xyl...) (chondroitin sulfate) serine glycosylation sites follow: Ser231, Ser324, and Ser415. The VWFA 2 domain maps to 633–805 (DIVLLVDGSW…SLLTNIVNDL (173 aa)). Positions 821 to 910 (PPSNLVTSEP…AGTETTLPIP (90 aa)) constitute a Fibronectin type-III 7 domain.

The protein belongs to the fibril-associated collagens with interrupted helices (FACIT) family. As to quaternary structure, trimer of identical chains each containing 190 kDa of non-triple-helical sequences. The triple-helical tail is stabilized by disulfide bonds at each end. In terms of processing, prolines at the third position of the tripeptide repeating unit (G-X-Y) are hydroxylated in some or all of the chains.

The protein resides in the secreted. Its subcellular location is the extracellular space. It localises to the extracellular matrix. Type XII collagen interacts with type I collagen-containing fibrils, the COL1 domain could be associated with the surface of the fibrils, and the COL2 and NC3 domains may be localized in the perifibrillar matrix. Could play a developmental role in regeneration. The protein is Collagen alpha-1(XII) chain of Notophthalmus viridescens (Eastern newt).